We begin with the raw amino-acid sequence, 541 residues long: Chaperonin GroEL 1 (541 aa).

ATP contacts are provided by residues 29–32 (TLGP), 86–90 (DGTTT), glycine 413, 477–479 (NAA), and aspartate 493.

This sequence belongs to the chaperonin (HSP60) family. Forms a cylinder of 14 subunits composed of two heptameric rings stacked back-to-back. Interacts with the co-chaperonin GroES.

Its subcellular location is the cytoplasm. The catalysed reaction is ATP + H2O + a folded polypeptide = ADP + phosphate + an unfolded polypeptide.. Functionally, together with its co-chaperonin GroES, plays an essential role in assisting protein folding. The GroEL-GroES system forms a nano-cage that allows encapsulation of the non-native substrate proteins and provides a physical environment optimized to promote and accelerate protein folding. This is Chaperonin GroEL 1 from Nocardioides sp. (strain ATCC BAA-499 / JS614).